A 327-amino-acid chain; its full sequence is GTPase Obg (327 aa).

Residues 1–159 (MQFIDQANII…WEVQLELKLL (159 aa)) enclose the Obg domain. The OBG-type G domain occupies 160–327 (AEVGIIGLPN…SLLFEVWKRI (168 aa)). Residues 166-173 (GLPNAGKS), 191-195 (FTTLI), 213-216 (DIPG), 280-283 (NKME), and 309-311 (SSS) each bind ATP. 2 residues coordinate Mg(2+): Ser173 and Thr193.

The protein belongs to the TRAFAC class OBG-HflX-like GTPase superfamily. OBG GTPase family. In terms of assembly, monomer. Requires Mg(2+) as cofactor.

It localises to the cytoplasm. An essential GTPase which binds GTP, GDP and possibly (p)ppGpp with moderate affinity, with high nucleotide exchange rates and a fairly low GTP hydrolysis rate. Plays a role in control of the cell cycle, stress response, ribosome biogenesis and in those bacteria that undergo differentiation, in morphogenesis control. In Prochlorococcus marinus (strain MIT 9312), this protein is GTPase Obg.